Here is a 66-residue protein sequence, read N- to C-terminus: Large ribosomal subunit protein bL33c (66 aa).

Belongs to the bacterial ribosomal protein bL33 family.

The protein localises to the plastid. Its subcellular location is the chloroplast. This chain is Large ribosomal subunit protein bL33c, found in Lotus japonicus (Lotus corniculatus var. japonicus).